A 227-amino-acid chain; its full sequence is Urease accessory protein UreF (227 aa).

Belongs to the UreF family. As to quaternary structure, ureD, UreF and UreG form a complex that acts as a GTP-hydrolysis-dependent molecular chaperone, activating the urease apoprotein by helping to assemble the nickel containing metallocenter of UreC. The UreE protein probably delivers the nickel.

It localises to the cytoplasm. Required for maturation of urease via the functional incorporation of the urease nickel metallocenter. The protein is Urease accessory protein UreF of Actinobacillus pleuropneumoniae serotype 5b (strain L20).